Consider the following 148-residue polypeptide: Large ribosomal subunit protein uL22 (148 aa).

This sequence belongs to the universal ribosomal protein uL22 family. In terms of assembly, part of the 50S ribosomal subunit.

Its function is as follows. This protein binds specifically to 23S rRNA. It makes multiple contacts with different domains of the 23S rRNA in the assembled 50S subunit and ribosome. Functionally, the globular domain of the protein is located near the polypeptide exit tunnel on the outside of the subunit, while an extended beta-hairpin is found that lines the wall of the exit tunnel in the center of the 70S ribosome. The chain is Large ribosomal subunit protein uL22 from Thermoplasma volcanium (strain ATCC 51530 / DSM 4299 / JCM 9571 / NBRC 15438 / GSS1).